Consider the following 549-residue polypeptide: Glucoamylase, intracellular sporulation-specific (549 aa).

Trp-198 contacts substrate. The active-site Proton acceptor is Asp-261. The Proton donor role is filled by Glu-264.

This sequence belongs to the glycosyl hydrolase 15 family.

It carries out the reaction Hydrolysis of terminal (1-&gt;4)-linked alpha-D-glucose residues successively from non-reducing ends of the chains with release of beta-D-glucose.. This Saccharomyces cerevisiae (strain ATCC 204508 / S288c) (Baker's yeast) protein is Glucoamylase, intracellular sporulation-specific (SGA1).